Here is a 379-residue protein sequence, read N- to C-terminus: Alanine racemase (379 aa).

The active-site Proton acceptor; specific for D-alanine is the Lys-41. The residue at position 41 (Lys-41) is an N6-(pyridoxal phosphate)lysine. A substrate-binding site is contributed by Arg-138. Tyr-260 serves as the catalytic Proton acceptor; specific for L-alanine. Met-319 contacts substrate.

Belongs to the alanine racemase family. Requires pyridoxal 5'-phosphate as cofactor.

It carries out the reaction L-alanine = D-alanine. Its pathway is amino-acid biosynthesis; D-alanine biosynthesis; D-alanine from L-alanine: step 1/1. Catalyzes the interconversion of L-alanine and D-alanine. May also act on other amino acids. The protein is Alanine racemase (alr) of Rhizobium meliloti (strain 1021) (Ensifer meliloti).